Reading from the N-terminus, the 284-residue chain is Nucleotide-binding protein Sbal223_0704 (284 aa).

8 to 15 (GRSGSGKS) provides a ligand contact to ATP. A GTP-binding site is contributed by 56 to 59 (DVRN).

The protein belongs to the RapZ-like family.

Its function is as follows. Displays ATPase and GTPase activities. The polypeptide is Nucleotide-binding protein Sbal223_0704 (Shewanella baltica (strain OS223)).